A 336-amino-acid chain; its full sequence is MTTLSPENSLSARRSATFILEKRNPPIDKAEWDSFFDENGHLAKSRDFICINILERGLHPFVRTEAWKFLTGYYSWQSSRDERLMVDSNRRRNYNSLCQMYEKIQPLLENLHGNFTETRNNIAYDIQRLYDKDPLGNVLIDKKKLEKTLLLSYVCNTKAEYQRGFHEMVMLFQLMVEHDHETFWLFQFFLQKTEHSCVINIGVGKNLDMLNSLITLLDPEFAEHLKGKGSGAVQSLFPWFCLCFQRAFKTFDDVWRLWEVLLTGKPCRNFQVLVAYSMLQMVREQALLECMSGDAILMACNNLIDLDADELISAACVVYSELMQKEVPQPLKEFLL.

Residues 57–265 enclose the Rab-GAP TBC domain; it reads GLHPFVRTEA…RLWEVLLTGK (209 aa).

Interacts with ACTB. Interacts with ARMC12. Interacts with TOMM20 and DNAH7. Interacts with RAP1A. Interacts with RAB10. In terms of tissue distribution, expressed in testis, specifically in elongating and elongated spermatids (at protein level). Expressed in the sperm midpiece (at protein level).

The protein localises to the cytoplasmic vesicle. It localises to the secretory vesicle. The protein resides in the acrosome. It is found in the cytoplasm. Its subcellular location is the cytoskeleton. Its function is as follows. Acts as a GTPase-activating protein for Rab family protein (s). Essential for the establishment of male fertility, and is required for both the production of normal sperm number and sperm function. Plays an important role in the formation of intact mitochondria, outer dense fibers and axoneme within the sperm tail. Essential for sperm mitochondrial sheath formation and for the interactions of ARMC12 with VDAC2 and VDAC3. May be involved in acrosome formation and cytoskeletal reorganization during spermiogenesis, possibly by regulating RAB3A activity. This is TBC1 domain family member 21 from Mus musculus (Mouse).